A 211-amino-acid chain; its full sequence is NADH-quinone oxidoreductase subunit I (211 aa).

The segment at Met-1–Arg-27 is disordered. 4Fe-4S ferredoxin-type domains follow at residues Leu-71 to Ala-101 and Arg-117 to Asp-146. The [4Fe-4S] cluster site is built by Cys-81, Cys-84, Cys-87, Cys-91, Cys-126, Cys-129, Cys-132, and Cys-136.

It belongs to the complex I 23 kDa subunit family. NDH-1 is composed of 14 different subunits. Subunits NuoA, H, J, K, L, M, N constitute the membrane sector of the complex. It depends on [4Fe-4S] cluster as a cofactor.

It is found in the cell membrane. It carries out the reaction a quinone + NADH + 5 H(+)(in) = a quinol + NAD(+) + 4 H(+)(out). NDH-1 shuttles electrons from NADH, via FMN and iron-sulfur (Fe-S) centers, to quinones in the respiratory chain. The immediate electron acceptor for the enzyme in this species is believed to be menaquinone. Couples the redox reaction to proton translocation (for every two electrons transferred, four hydrogen ions are translocated across the cytoplasmic membrane), and thus conserves the redox energy in a proton gradient. This chain is NADH-quinone oxidoreductase subunit I, found in Mycobacterium bovis (strain ATCC BAA-935 / AF2122/97).